The following is a 286-amino-acid chain: Polyamine aminopropyltransferase (286 aa).

Residues Asp3–Lys240 form the PABS domain. Gln32 contacts S-methyl-5'-thioadenosine. Residues His63 and Asp87 each coordinate spermidine. Residues Glu107 and Asp139–Gly140 contribute to the S-methyl-5'-thioadenosine site. The Proton acceptor role is filled by Asp158. Asp158–Asp161 is a spermidine binding site. Pro165 lines the S-methyl-5'-thioadenosine pocket.

Belongs to the spermidine/spermine synthase family. In terms of assembly, homodimer or homotetramer.

The protein localises to the cytoplasm. The enzyme catalyses S-adenosyl 3-(methylsulfanyl)propylamine + putrescine = S-methyl-5'-thioadenosine + spermidine + H(+). It functions in the pathway amine and polyamine biosynthesis; spermidine biosynthesis; spermidine from putrescine: step 1/1. In terms of biological role, catalyzes the irreversible transfer of a propylamine group from the amino donor S-adenosylmethioninamine (decarboxy-AdoMet) to putrescine (1,4-diaminobutane) to yield spermidine. This is Polyamine aminopropyltransferase from Clostridium acetobutylicum (strain ATCC 824 / DSM 792 / JCM 1419 / IAM 19013 / LMG 5710 / NBRC 13948 / NRRL B-527 / VKM B-1787 / 2291 / W).